The chain runs to 119 residues: Large ribosomal subunit protein bL20 (119 aa).

It belongs to the bacterial ribosomal protein bL20 family.

Functionally, binds directly to 23S ribosomal RNA and is necessary for the in vitro assembly process of the 50S ribosomal subunit. It is not involved in the protein synthesizing functions of that subunit. This chain is Large ribosomal subunit protein bL20, found in Bacillus licheniformis (strain ATCC 14580 / DSM 13 / JCM 2505 / CCUG 7422 / NBRC 12200 / NCIMB 9375 / NCTC 10341 / NRRL NRS-1264 / Gibson 46).